The sequence spans 322 residues: tRNA (guanine-N(7)-)-methyltransferase (322 aa).

Positions 29, 55, and 105 each coordinate S-adenosyl-L-methionine. Residue Asp-105 is part of the active site. 2 residues coordinate substrate: Lys-109 and Asp-141.

This sequence belongs to the class I-like SAM-binding methyltransferase superfamily. TrmB family.

The enzyme catalyses guanosine(46) in tRNA + S-adenosyl-L-methionine = N(7)-methylguanosine(46) in tRNA + S-adenosyl-L-homocysteine. Its pathway is tRNA modification; N(7)-methylguanine-tRNA biosynthesis. In terms of biological role, catalyzes the formation of N(7)-methylguanine at position 46 (m7G46) in tRNA. In Deinococcus radiodurans (strain ATCC 13939 / DSM 20539 / JCM 16871 / CCUG 27074 / LMG 4051 / NBRC 15346 / NCIMB 9279 / VKM B-1422 / R1), this protein is tRNA (guanine-N(7)-)-methyltransferase.